We begin with the raw amino-acid sequence, 135 residues long: Small ribosomal subunit protein uS12 (135 aa).

Asp89 is modified (3-methylthioaspartic acid). The disordered stretch occupies residues 101–135 (SLDTSGVADRKQSRSKYGAKQPKAGAAAPAKGKGR). Residues 118–135 (GAKQPKAGAAAPAKGKGR) show a composition bias toward low complexity.

It belongs to the universal ribosomal protein uS12 family. Part of the 30S ribosomal subunit. Contacts proteins S8 and S17. May interact with IF1 in the 30S initiation complex.

With S4 and S5 plays an important role in translational accuracy. Functionally, interacts with and stabilizes bases of the 16S rRNA that are involved in tRNA selection in the A site and with the mRNA backbone. Located at the interface of the 30S and 50S subunits, it traverses the body of the 30S subunit contacting proteins on the other side and probably holding the rRNA structure together. The combined cluster of proteins S8, S12 and S17 appears to hold together the shoulder and platform of the 30S subunit. The polypeptide is Small ribosomal subunit protein uS12 (Chlorobium limicola (strain DSM 245 / NBRC 103803 / 6330)).